The following is an 81-amino-acid chain: Cytotoxin 2 (81 aa).

Positions 1–21 are cleaved as a signal peptide; sequence MKTLLLTLVVVTIVCLDLGYT. Disulfide bonds link cysteine 24–cysteine 42, cysteine 35–cysteine 59, cysteine 63–cysteine 74, and cysteine 75–cysteine 80.

This sequence belongs to the three-finger toxin family. Short-chain subfamily. Type IA cytotoxin sub-subfamily. As to quaternary structure, monomer in solution; Homodimer and oligomer in the presence of negatively charged lipids forming a pore with a size ranging between 20 and 30 Angstroms. Expressed by the venom gland.

The protein localises to the secreted. The protein resides in the target cell membrane. In terms of biological role, shows cytolytic activity on many different cells by forming pore in lipid membranes. In vivo, increases heart rate or kills the animal by cardiac arrest. In addition, it binds to heparin with high affinity, interacts with Kv channel-interacting protein 1 (KCNIP1) in a calcium-independent manner, and binds to integrin alpha-V/beta-3 (ITGAV/ITGB3) with moderate affinity. This chain is Cytotoxin 2, found in Naja kaouthia (Monocled cobra).